The chain runs to 259 residues: MSETGQRESVRPSPIFLGLLGLTAVGGALAWLAGETVQPLAYAGVFVMVIAGWLVSLCLHEFGHAFTAWRFGDHDVAVRGYLTLDPRRYSHPMLSLGLPMLFIALGGIGLPGAAVYVHTWFMTTARRTLVSLAGPTVNLALAMLLLAATRLLFDPIHAVLWAGVAFLAFLQLTALVLNLLPIPGLDGYAALEPHLRPETQRALAPAKQFALVFRLVLFLAPTLNGWFFGVVYWLFDLSGVSHRLAAAGSVLARFWSIWF.

2 helical membrane passes run 14-34 (PIFLGLLGLTAVGGALAWLAG) and 39-59 (PLAYAGVFVMVIAGWLVSLCL). His60 is a binding site for Zn(2+). The active site involves Glu61. His64 serves as a coordination point for Zn(2+). A run of 4 helical transmembrane segments spans residues 97-117 (GLPMLFIALGGIGLPGAAVYV), 128-148 (TLVSLAGPTVNLALAMLLLAA), 156-176 (IHAVLWAGVAFLAFLQLTALV), and 215-235 (LVLFLAPTLNGWFFGVVYWLF).

Belongs to the peptidase M50B family. Requires Zn(2+) as cofactor.

The protein resides in the cell membrane. The protein is Putative zinc metalloprotease Rip2 (rip2) of Mycobacterium tuberculosis (strain ATCC 35801 / TMC 107 / Erdman).